The sequence spans 111 residues: Ig kappa chain V-III region PC 2880/PC 1229 (111 aa).

The tract at residues 1–23 (DIVLTQSPASLAVSLGQRATISC) is framework-1. Cys-23 and Cys-92 form a disulfide bridge. The tract at residues 24–38 (RASESVDNYGISFMN) is complementarity-determining-1. The tract at residues 39–53 (WFQQKPGQPPKLLIY) is framework-2. Positions 54–60 (AASNQGS) are complementarity-determining-2. The tract at residues 61–92 (GVPARFSGSGSGTDFSLNIHPMEEDDTAMYFC) is framework-3. A complementarity-determining-3 region spans residues 93 to 101 (QQSKEVPWT). Residues 102–111 (FGGGTKLEIK) are framework-4.

This is Ig kappa chain V-III region PC 2880/PC 1229 from Mus musculus (Mouse).